The chain runs to 392 residues: Formate-dependent phosphoribosylglycinamide formyltransferase (392 aa).

N(1)-(5-phospho-beta-D-ribosyl)glycinamide is bound by residues 15–16 and Glu-75; that span reads EL. ATP is bound by residues Arg-107, Lys-148, 153–158, 188–191, and Glu-196; these read SSGKGQ and EEFL. The ATP-grasp domain occupies 112 to 302; it reads DLASEELALL…EFELHLRAVL (191 aa). Mg(2+) contacts are provided by Glu-261 and Glu-273. Residues Asp-280, Lys-350, and 357-358 contribute to the N(1)-(5-phospho-beta-D-ribosyl)glycinamide site; that span reads RR.

It belongs to the PurK/PurT family. Homodimer.

The enzyme catalyses N(1)-(5-phospho-beta-D-ribosyl)glycinamide + formate + ATP = N(2)-formyl-N(1)-(5-phospho-beta-D-ribosyl)glycinamide + ADP + phosphate + H(+). It participates in purine metabolism; IMP biosynthesis via de novo pathway; N(2)-formyl-N(1)-(5-phospho-D-ribosyl)glycinamide from N(1)-(5-phospho-D-ribosyl)glycinamide (formate route): step 1/1. Functionally, involved in the de novo purine biosynthesis. Catalyzes the transfer of formate to 5-phospho-ribosyl-glycinamide (GAR), producing 5-phospho-ribosyl-N-formylglycinamide (FGAR). Formate is provided by PurU via hydrolysis of 10-formyl-tetrahydrofolate. In Prochlorococcus marinus (strain MIT 9303), this protein is Formate-dependent phosphoribosylglycinamide formyltransferase.